Here is an 85-residue protein sequence, read N- to C-terminus: N.vectensis toxin 6 (85 aa).

Residues 1–20 (MISFKTVIVCLFLWVVIIGA) form the signal peptide. 3 disulfide bridges follow: cysteine 46/cysteine 82, cysteine 48/cysteine 71, and cysteine 64/cysteine 83.

Probable toxin. The polypeptide is N.vectensis toxin 6 (Nematostella vectensis (Starlet sea anemone)).